The chain runs to 337 residues: Heat-inducible transcription repressor HrcA (337 aa).

This sequence belongs to the HrcA family.

Functionally, negative regulator of class I heat shock genes (grpE-dnaK-dnaJ and groELS operons). Prevents heat-shock induction of these operons. This Metamycoplasma arthritidis (strain 158L3-1) (Mycoplasma arthritidis) protein is Heat-inducible transcription repressor HrcA.